The sequence spans 893 residues: ATPase family gene 2 protein homolog A (893 aa).

Basic residues predominate over residues 1 to 10; that stretch reads MSSKKNRKRL. The disordered stretch occupies residues 1 to 26; the sequence is MSSKKNRKRLNQSAENGSSLPSAASS. Positions 1 to 237 are required for interaction with AFG2B and CINP; that stretch reads MSSKKNRKRL…SLELSLQLSQ (237 aa). The segment covering 11–25 has biased composition (polar residues); it reads NQSAENGSSLPSAAS. Position 272 is a phosphothreonine (Thr-272). Phosphoserine is present on residues Ser-274 and Ser-279. ATP is bound by residues 394–401 and 668–675; these read GPPGTGKT and GPPGCSKT. Lys-859 participates in a covalent cross-link: Glycyl lysine isopeptide (Lys-Gly) (interchain with G-Cter in SUMO2).

The protein belongs to the AAA ATPase family. AFG2 subfamily. In terms of assembly, part of the 55LCC heterohexameric ATPase complex composed at least of AIRIM, AFG2A, AFG2B and CINP. Associates with pre-60S ribosomal particles.

The protein resides in the cytoplasm. Its subcellular location is the mitochondrion. The protein localises to the cytoskeleton. It is found in the spindle. The enzyme catalyses ATP + H2O = ADP + phosphate + H(+). AFG2A alone display limited ATPase activity and is not regulated by RNA or DNA binding. In the context of 55LCC heterohexameric ATPase complex, the ATPase activity increases and is stimulated by DNA binding and inhibited in presence of RNA. Functionally, ATP-dependent chaperone part of the 55LCC heterohexameric ATPase complex which is chromatin-associated and promotes replisome proteostasis to maintain replication fork progression and genome stability. Required for replication fork progression, sister chromatid cohesion, and chromosome stability. The ATPase activity is specifically enhanced by replication fork DNA and is coupled to cysteine protease-dependent cleavage of replisome substrates in response to replication fork damage. Uses ATPase activity to process replisome substrates in S-phase, facilitating their proteolytic turnover from chromatin to ensure DNA replication and mitotic fidelity. Plays an essential role in the cytoplasmic maturation steps of pre-60S ribosomal particles by promoting the release of shuttling protein RSL24D1/RLP24 from the pre-ribosomal particles. May be involved in morphological and functional mitochondrial transformations during spermatogenesis. The chain is ATPase family gene 2 protein homolog A from Homo sapiens (Human).